A 108-amino-acid chain; its full sequence is MEKEIIITTTETVPQREVAEILGVVFGNTVRAKHVGKDILAGLKNIVGGEIEEYTEMLRDARMEALNRMIKEAKKLGADAVVNVRFTTSQTMAGAAELLAYGTAVRLR.

Belongs to the UPF0145 family.

This is UPF0145 protein AF_0869 from Archaeoglobus fulgidus (strain ATCC 49558 / DSM 4304 / JCM 9628 / NBRC 100126 / VC-16).